The primary structure comprises 629 residues: MFYQDPFDVIIIGGGHAGTEAAMAAARMGQQTLLLTHNIDTLGQMSCNPAIGGIGKGHLVKEVDALGGLMAKAIDQAGIQFRILNASKGPAVRATRAQADRVLYRQAVRTALENQPNLMIFQQAVEDLIVENDRVVGAVTQMGLKFRAKAVVLTVGTFLDGKIHIGLDNYSGGRAGDPPSIPLSRRLRELPLRVSRLKTGTPPRIDARTIDFSVLAQQHGDNPMPVFSFMGNASQHPQQVPCYITHTNEKTHDVIRNNLDRSPMYAGVIEGIGPRYCPSIEDKVMRFADRNQHQIFLEPEGLTSNEIYPNGISTSLPFDVQMQIVRSMQGMENAKIVRPGYAIEYDFFDPRDLKPTLESKFIHGLFFAGQINGTTGYEEAAAQGLLAGLNAARLSADKEGWAPARSQAYLGVLVDDLCTLGTKEPYRMFTSRAEYRLMLREDNADLRLTEMGRELGLVDDERWARFNEKLENIERERQRLKSTWVTPSAESADEVNTHLTTPLSREASGEDLLRRPEMTYAQLTSLAAFAPALEDEQAAEQVEIQVKYEGYIARQQDEIEKQLRNENTLLPATLDYRQVSGLSNEVIAKLNDHKPASIGQASRISGVTPAAISILLVWLKKQGMLRRSA.

FAD is bound by residues 13–18 (GGGHAG), valine 125, and serine 180. 273-287 (GPRYCPSIEDKVMRF) is an NAD(+) binding site. Glutamine 370 is an FAD binding site.

This sequence belongs to the MnmG family. Homodimer. Heterotetramer of two MnmE and two MnmG subunits. The cofactor is FAD.

It is found in the cytoplasm. NAD-binding protein involved in the addition of a carboxymethylaminomethyl (cmnm) group at the wobble position (U34) of certain tRNAs, forming tRNA-cmnm(5)s(2)U34. This Salmonella schwarzengrund (strain CVM19633) protein is tRNA uridine 5-carboxymethylaminomethyl modification enzyme MnmG.